We begin with the raw amino-acid sequence, 179 residues long: Large ribosomal subunit protein uL5 (179 aa).

The protein belongs to the universal ribosomal protein uL5 family. As to quaternary structure, part of the 50S ribosomal subunit; part of the 5S rRNA/L5/L18/L25 subcomplex. Contacts the 5S rRNA and the P site tRNA. Forms a bridge to the 30S subunit in the 70S ribosome.

Its function is as follows. This is one of the proteins that bind and probably mediate the attachment of the 5S RNA into the large ribosomal subunit, where it forms part of the central protuberance. In the 70S ribosome it contacts protein S13 of the 30S subunit (bridge B1b), connecting the 2 subunits; this bridge is implicated in subunit movement. Contacts the P site tRNA; the 5S rRNA and some of its associated proteins might help stabilize positioning of ribosome-bound tRNAs. This is Large ribosomal subunit protein uL5 from Rickettsia rickettsii (strain Iowa).